A 245-amino-acid chain; its full sequence is 1-(5-phosphoribosyl)-5-[(5-phosphoribosylamino)methylideneamino] imidazole-4-carboxamide isomerase (245 aa).

Residue D7 is the Proton acceptor of the active site. D129 functions as the Proton donor in the catalytic mechanism.

It belongs to the HisA/HisF family.

It is found in the cytoplasm. It catalyses the reaction 1-(5-phospho-beta-D-ribosyl)-5-[(5-phospho-beta-D-ribosylamino)methylideneamino]imidazole-4-carboxamide = 5-[(5-phospho-1-deoxy-D-ribulos-1-ylimino)methylamino]-1-(5-phospho-beta-D-ribosyl)imidazole-4-carboxamide. It participates in amino-acid biosynthesis; L-histidine biosynthesis; L-histidine from 5-phospho-alpha-D-ribose 1-diphosphate: step 4/9. This is 1-(5-phosphoribosyl)-5-[(5-phosphoribosylamino)methylideneamino] imidazole-4-carboxamide isomerase from Escherichia coli O81 (strain ED1a).